The sequence spans 153 residues: Regulator of sigma D (153 aa).

Belongs to the Rsd/AlgQ family. In terms of assembly, interacts with RpoD.

It is found in the cytoplasm. Functionally, binds RpoD and negatively regulates RpoD-mediated transcription activation by preventing the interaction between the primary sigma factor RpoD with the catalytic core of the RNA polymerase and with promoter DNA. May be involved in replacement of the RNA polymerase sigma subunit from RpoD to RpoS during the transition from exponential growth to the stationary phase. In Pectobacterium carotovorum subsp. carotovorum (strain PC1), this protein is Regulator of sigma D.